The primary structure comprises 70 residues: ATP synthase subunit epsilon, mitochondrial (70 aa).

It belongs to the eukaryotic ATPase epsilon family. F-type ATPases have 2 components, CF(1) - the catalytic core - and CF(0) - the membrane proton channel. CF(1) has five subunits: alpha(3), beta(3), gamma(1), delta(1), epsilon(1). CF(0) has three main subunits: a, b and c.

The protein localises to the mitochondrion. Its subcellular location is the mitochondrion inner membrane. Its function is as follows. Mitochondrial membrane ATP synthase (F(1)F(0) ATP synthase or Complex V) produces ATP from ADP in the presence of a proton gradient across the membrane which is generated by electron transport complexes of the respiratory chain. F-type ATPases consist of two structural domains, F(1) - containing the extramembraneous catalytic core, and F(0) - containing the membrane proton channel, linked together by a central stalk and a peripheral stalk. During catalysis, ATP synthesis in the catalytic domain of F(1) is coupled via a rotary mechanism of the central stalk subunits to proton translocation. Part of the complex F(1) domain and of the central stalk which is part of the complex rotary element. Rotation of the central stalk against the surrounding alpha(3)beta(3) subunits leads to hydrolysis of ATP in three separate catalytic sites on the beta subunits. The protein is ATP synthase subunit epsilon, mitochondrial of Ipomoea batatas (Sweet potato).